Consider the following 109-residue polypeptide: Latartoxin-2a (109 aa).

A signal peptide spans 1-19 (MKVLVIIALCLVAFQSALS). A propeptide spans 20-37 (KKIENFESYIEDLKSEAR) (removed in mature form). A Processing quadruplet motif motif is present at residues 34-37 (SEAR). Cystine bridges form between Cys39/Cys56, Cys46/Cys67, Cys55/Cys81, Cys69/Cys79, and Cys72/Cys93. A Valine amide modification is found at Val108.

The protein belongs to the neurotoxin 19 (CSTX) family. 11 (latartoxin) subfamily. Contains 5 disulfide bonds. Post-translationally, cleavage of the propeptide depends on the processing quadruplet motif (XXXR, with at least one of X being E). Expressed by the venom gland.

Its subcellular location is the secreted. Insect toxin. Causes paralysis in larvae of C.vicina by depolarizing membranes at the neuromuscular junction. In Lachesana tarabaevi (Spider), this protein is Latartoxin-2a.